The sequence spans 311 residues: Metal-staphylopine import system permease protein CntB (311 aa).

The next 6 membrane-spanning stretches (helical) occupy residues 9–29 (IALM…LTYI), 105–125 (LTII…VVSA), 139–159 (VAFF…IIYV), 173–193 (GPES…GIYF), 237–257 (IFCM…YIFA), and 274–294 (FPVI…FNTL). The region spanning 99 to 295 (FMNTLKLTII…VLFIVFNTLA (197 aa)) is the ABC transmembrane type-1 domain.

This sequence belongs to the binding-protein-dependent transport system permease family. As to quaternary structure, the complex is composed of two ATP-binding proteins (CntD and CntF), two transmembrane proteins (CntB and CntC) and a solute-binding protein (CntA).

The protein resides in the cell membrane. Nickel/cobalt import is reduced in the presence of zinc. Part of the ABC transporter complex CntABCDF (Opp1) involved in the uptake of metal in complex with the metallophore staphylopine (StP). Involved in the import of divalent metals ions such as nickel, cobalt and zinc. Probably responsible for the translocation of the substrate across the membrane. Plays a major role in nickel/cobalt import in zinc-depleted conditions. Contributes to virulence. Required for full urease activity in vitro. This Staphylococcus aureus (strain NCTC 8325 / PS 47) protein is Metal-staphylopine import system permease protein CntB.